A 472-amino-acid polypeptide reads, in one-letter code: Lycopene beta cyclase, chloroplastic (472 aa).

The transit peptide at Met-1–Thr-25 directs the protein to the chloroplast. Residues Met-1 to Ser-27 are disordered. Leu-62–Pro-90 contacts NAD(+).

The protein belongs to the lycopene cyclase family. Expressed in flower buds and lips. Detected in roots and leaves.

The protein localises to the plastid. It is found in the chloroplast. The enzyme catalyses a carotenoid psi-end group = a carotenoid beta-end derivative. Its pathway is carotenoid biosynthesis; beta-carotene biosynthesis. It functions in the pathway carotenoid biosynthesis; beta-zeacarotene biosynthesis. Catalyzes the double cyclization reaction which converts lycopene to beta-carotene and neurosporene to beta-zeacarotene. The chain is Lycopene beta cyclase, chloroplastic (LCY-B) from Oncidium hybrid cultivar (Orchid).